We begin with the raw amino-acid sequence, 92 residues long: Transcriptional regulator WhiB1 (92 aa).

Positions 12 to 74 (ACRDKDPELF…GGLSEDERRA (63 aa)) constitute a 4Fe-4S Wbl-type domain. Residues C13, C41, C44, and C50 each coordinate [4Fe-4S] cluster.

This sequence belongs to the WhiB family. The cofactor is [4Fe-4S] cluster. In terms of processing, the Fe-S cluster can be nitrosylated by nitric oxide (NO). Upon Fe-S cluster removal intramolecular disulfide bonds are formed.

The protein localises to the cytoplasm. Acts as a transcriptional regulator. Probably redox-responsive. The apo- but not holo-form probably binds DNA. In Bifidobacterium longum (strain NCC 2705), this protein is Transcriptional regulator WhiB1 (whiB1).